A 210-amino-acid chain; its full sequence is dITP/XTP pyrophosphatase (210 aa).

19–24 (SNNPGK) serves as a coordination point for substrate. The Mg(2+) site is built by Asp51 and Asp80. Catalysis depends on Asp80, which acts as the Proton acceptor. Substrate contacts are provided by residues Ser81, 166–169 (FGYD), Lys189, and 194–195 (HR).

The protein belongs to the HAM1 NTPase family. In terms of assembly, homodimer. It depends on Mg(2+) as a cofactor.

It carries out the reaction XTP + H2O = XMP + diphosphate + H(+). The catalysed reaction is dITP + H2O = dIMP + diphosphate + H(+). It catalyses the reaction ITP + H2O = IMP + diphosphate + H(+). Pyrophosphatase that catalyzes the hydrolysis of nucleoside triphosphates to their monophosphate derivatives, with a high preference for the non-canonical purine nucleotides XTP (xanthosine triphosphate), dITP (deoxyinosine triphosphate) and ITP. Seems to function as a house-cleaning enzyme that removes non-canonical purine nucleotides from the nucleotide pool, thus preventing their incorporation into DNA/RNA and avoiding chromosomal lesions. The sequence is that of dITP/XTP pyrophosphatase from Burkholderia mallei (strain ATCC 23344).